Here is a 256-residue protein sequence, read N- to C-terminus: Thiazole synthase (256 aa).

The active-site Schiff-base intermediate with DXP is the lysine 95. 1-deoxy-D-xylulose 5-phosphate contacts are provided by residues glycine 156, 182–183 (AG), and 204–205 (NT).

Belongs to the ThiG family. Homotetramer. Forms heterodimers with either ThiH or ThiS.

It localises to the cytoplasm. It catalyses the reaction [ThiS sulfur-carrier protein]-C-terminal-Gly-aminoethanethioate + 2-iminoacetate + 1-deoxy-D-xylulose 5-phosphate = [ThiS sulfur-carrier protein]-C-terminal Gly-Gly + 2-[(2R,5Z)-2-carboxy-4-methylthiazol-5(2H)-ylidene]ethyl phosphate + 2 H2O + H(+). The protein operates within cofactor biosynthesis; thiamine diphosphate biosynthesis. Its function is as follows. Catalyzes the rearrangement of 1-deoxy-D-xylulose 5-phosphate (DXP) to produce the thiazole phosphate moiety of thiamine. Sulfur is provided by the thiocarboxylate moiety of the carrier protein ThiS. In vitro, sulfur can be provided by H(2)S. The protein is Thiazole synthase of Citrobacter koseri (strain ATCC BAA-895 / CDC 4225-83 / SGSC4696).